The primary structure comprises 555 residues: Polypyrimidine tract-binding protein 1 (555 aa).

Methionine 1 is subject to N-acetylmethionine. Serine 16 bears the Phosphoserine mark. 3 consecutive RRM domains span residues 58-142 (RVIH…SSPN), 183-259 (LRII…FSKL), and 361-412 (SVLL…SQAQ). A Glycyl lysine isopeptide (Lys-Gly) (interchain with G-Cter in SUMO2) cross-link involves residue lysine 64. At tyrosine 126 the chain carries Phosphotyrosine. Threonine 137 is modified (phosphothreonine). Serine 140 is subject to Phosphoserine. Residue lysine 217 forms a Glycyl lysine isopeptide (Lys-Gly) (interchain with G-Cter in SUMO2) linkage. The tract at residues 435 to 457 (HQSVQLPREGQEDQGLTKDYGSS) is disordered. Phosphoserine is present on serine 457. The RRM 4 domain maps to 478–553 (ATLHLSNIPP…HHLRVSFSKS (76 aa)).

In terms of assembly, monomer. Part of a ternary complex containing KHSRP, PTBP1, PTBP2 and HNRPH1. Interacts with SFPQ. Interacts with RAVER1. Interacts with IVNS1ABP (via BACK domain); the interaction is direct. As to expression, expressed in myoblast; expression gradually decreases during muscle cell differentiation (at protein level).

The protein localises to the nucleus. Functionally, plays a role in pre-mRNA splicing and in the regulation of alternative splicing events. Activates exon skipping of its own pre-mRNA during muscle cell differentiation. Binds to the polypyrimidine tract of introns. May promote RNA looping when bound to two separate polypyrimidine tracts in the same pre-mRNA. May promote the binding of U2 snRNP to pre-mRNA. Cooperates with RAVER1 to modulate switching between mutually exclusive exons during maturation of the TPM1 pre-mRNA. Represses the splicing of MAPT/Tau exon 10. Binds to polypyrimidine-rich controlling element (PCE) of CFTR and promotes exon skipping of CFTR exon 9, thereby antagonizing TIA1 and its role in exon inclusion of CFTR exon 9. Plays a role in the splicing of pyruvate kinase PKM by binding repressively to a polypyrimidine tract flanking PKM exon 9, inhibiting exon 9 inclusion and resulting in exon 10 inclusion and production of the PKM M2 isoform. This chain is Polypyrimidine tract-binding protein 1 (Ptbp1), found in Mus musculus (Mouse).